We begin with the raw amino-acid sequence, 211 residues long: FMN-dependent NADH:quinone oxidoreductase (211 aa).

FMN-binding positions include 17–19 (SNS), 102–105 (MWNL), and 146–149 (SRGG).

It belongs to the azoreductase type 1 family. Homodimer. FMN is required as a cofactor.

The enzyme catalyses 2 a quinone + NADH + H(+) = 2 a 1,4-benzosemiquinone + NAD(+). It carries out the reaction N,N-dimethyl-1,4-phenylenediamine + anthranilate + 2 NAD(+) = 2-(4-dimethylaminophenyl)diazenylbenzoate + 2 NADH + 2 H(+). Functionally, quinone reductase that provides resistance to thiol-specific stress caused by electrophilic quinones. Its function is as follows. Also exhibits azoreductase activity. Catalyzes the reductive cleavage of the azo bond in aromatic azo compounds to the corresponding amines. The polypeptide is FMN-dependent NADH:quinone oxidoreductase (Macrococcus caseolyticus (strain JCSC5402) (Macrococcoides caseolyticum)).